The sequence spans 447 residues: Delta(5) fatty acid desaturase fat-4 (447 aa).

The Cytochrome b5 heme-binding domain occupies 1-80 (MVLREQEHEP…TQEPEIPDIK (80 aa)). 4 consecutive transmembrane segments (helical) span residues 137–157 (IFTILFAFYLQYHTYYLPSAI), 257–277 (WTFMLPFLRLSWLLQSIIFVS), 292–312 (IYEQVGLSLHWAWSLGQLYFL), and 319–339 (IMFFLVSHLVGGFLLSHVVTF).

Belongs to the fatty acid desaturase type 1 family.

It is found in the membrane. It catalyses the reaction (11Z,14Z)-eicosadienoyl-CoA + 2 Fe(II)-[cytochrome b5] + O2 + 2 H(+) = (5Z,11Z,14Z)-eicosatrienoyl-CoA + 2 Fe(III)-[cytochrome b5] + 2 H2O. The enzyme catalyses (11Z,14Z,17Z)-eicosatrienoyl-CoA + 2 Fe(II)-[cytochrome b5] + O2 + 2 H(+) = (5Z,11Z,14Z,17Z)-eicosatetraenoyl-CoA + 2 Fe(III)-[cytochrome b5] + 2 H2O. The catalysed reaction is (8Z,11Z,14Z,17Z)-eicosatetraenoyl-CoA + 2 Fe(II)-[cytochrome b5] + O2 + 2 H(+) = (5Z,8Z,11Z,14Z,17Z)-eicosapentaenoyl-CoA + 2 Fe(III)-[cytochrome b5] + 2 H2O. It carries out the reaction (8Z,11Z,14Z)-eicosatrienoyl-CoA + 2 Fe(II)-[cytochrome b5] + O2 + 2 H(+) = (5Z,8Z,11Z,14Z)-eicosatetraenoyl-CoA + 2 Fe(III)-[cytochrome b5] + 2 H2O. The protein operates within lipid metabolism; polyunsaturated fatty acid biosynthesis. Its function is as follows. Can function as a Delta(5) fatty acid desaturase and behaves as a (8-3) desaturase. Introduces a double bond in the fatty acid chain 5 carbons away from carboxy terminal to biosynthesize polyunsaturated fatty acids (PUFAs) endogenously (PUFAs are essential for membrane structure and many cellular and physiological processes). Acts on a variety of substrates such as dihomo-gamma-linoleoyl-CoA ((8Z,11Z,14Z)-eicosatrienoyl-CoA, 20:3n-6) to generate arachidonoyl-CoA ((5Z,8Z,11Z,14Z)-eicosatetraenoyl-CoA, 20:4n-6). Also acts on a number of other substrates, including fatty acids that do not contain a double bond at the 8 position like (11Z,14Z,17Z)-eicosatrienoyl-CoA (20:3n-3) to produce (5Z,11Z,14Z,17Z)-eicosatetraenoyl-CoA (20:4n-3). Unlike plants, Caenorhabditis elegans desaturases seem to use fatty acyl-CoAs as substrates. This chain is Delta(5) fatty acid desaturase fat-4 (fat-4), found in Caenorhabditis elegans.